The following is a 153-amino-acid chain: UPF0260 protein YcgN (153 aa).

This sequence belongs to the UPF0260 family.

In Salmonella agona (strain SL483), this protein is UPF0260 protein YcgN.